The following is a 236-amino-acid chain: UPF0257 lipoprotein YnfC (236 aa).

A signal peptide spans 1 to 16 (MKYKLLPCLLAILLTG). Cys-17 carries the N-palmitoyl cysteine lipid modification. Cys-17 carries the S-diacylglycerol cysteine lipid modification.

This sequence belongs to the UPF0257 family.

It is found in the cell membrane. This is UPF0257 lipoprotein YnfC from Escherichia coli O45:K1 (strain S88 / ExPEC).